Here is a 539-residue protein sequence, read N- to C-terminus: Probable elastin-binding protein EbpS (539 aa).

The span at 1-14 shows a compositional bias: basic and acidic residues; the sequence is MSKNNFRDDFEKNR. Positions 1-324 are disordered; sequence MSKNNFRDDF…EDGNDGFQAH (324 aa). The segment covering 21–34 has biased composition (acidic residues); it reads DQFEDNTNEFDENS. The span at 35 to 52 shows a compositional bias: low complexity; it reads NESNDFDNQSDQQFPPRN. Residues 53 to 69 show a composition bias toward basic residues; the sequence is AQRRQRRRNQATNKNRK. The segment covering 70–81 has biased composition (polar residues); that stretch reads FGNQNSDSNANG. Basic and acidic residues-rich tracts occupy residues 100–176, 210–226, and 233–259; these read QENH…DQQN, EHHD…RDLN, and QNRK…EPKK. A compositionally biased stretch (low complexity) spans 266–283; sequence AAVGAGAAGAAGAAGVAA. Residues 291-317 are compositionally biased toward basic and acidic residues; the sequence is KNNNHKDNHSHNRDHQDDHRNHKHEDG. Residues 335-355 form a helical membrane-spanning segment; sequence ILLPLIALLLILAALAIFIGM. Composition is skewed to basic and acidic residues over residues 362 to 371 and 378 to 417; these read KDSNQADNKT and DNNK…KATT. The disordered stretch occupies residues 362–491; sequence KDSNQADNKT…NSSNSGQQTH (130 aa). Positions 418 to 490 are enriched in low complexity; sequence DNDSSNNSSD…SNSSNSGQQT (73 aa). The LysM domain maps to 489 to 537; that stretch reads QTHVVSGNENLYRIAIQYYGEGTVENVNKLKQANGLSSNNISNGQKLII.

The protein resides in the cell membrane. The chain is Probable elastin-binding protein EbpS (ebpS) from Staphylococcus haemolyticus (strain JCSC1435).